The sequence spans 348 residues: Tetraacyldisaccharide 4'-kinase (348 aa).

50-57 contributes to the ATP binding site; sequence TMGGTGKT.

The protein belongs to the LpxK family.

It catalyses the reaction a lipid A disaccharide + ATP = a lipid IVA + ADP + H(+). It participates in glycolipid biosynthesis; lipid IV(A) biosynthesis; lipid IV(A) from (3R)-3-hydroxytetradecanoyl-[acyl-carrier-protein] and UDP-N-acetyl-alpha-D-glucosamine: step 6/6. In terms of biological role, transfers the gamma-phosphate of ATP to the 4'-position of a tetraacyldisaccharide 1-phosphate intermediate (termed DS-1-P) to form tetraacyldisaccharide 1,4'-bis-phosphate (lipid IVA). This is Tetraacyldisaccharide 4'-kinase from Desulfotalea psychrophila (strain LSv54 / DSM 12343).